Reading from the N-terminus, the 393-residue chain is Methylthioribose kinase (393 aa).

ATP is bound by residues asparagine 38, lysine 53, and 107-109 (EDL). Aspartate 225 lines the substrate pocket. 242 to 244 (DPE) lines the ATP pocket. Arginine 332 provides a ligand contact to substrate.

Belongs to the methylthioribose kinase family. As to quaternary structure, homodimer.

The catalysed reaction is 5-(methylsulfanyl)-D-ribose + ATP = 5-(methylsulfanyl)-alpha-D-ribose 1-phosphate + ADP + H(+). It functions in the pathway amino-acid biosynthesis; L-methionine biosynthesis via salvage pathway; S-methyl-5-thio-alpha-D-ribose 1-phosphate from S-methyl-5'-thioadenosine (hydrolase route): step 2/2. Its function is as follows. Catalyzes the phosphorylation of methylthioribose into methylthioribose-1-phosphate. The chain is Methylthioribose kinase from Bacillus cereus (strain ATCC 10987 / NRS 248).